A 280-amino-acid chain; its full sequence is Vitamin B12-binding protein (280 aa).

Residues 1-27 form the signal peptide; the sequence is MMPLGLFPLPRAAAVLLISLLTLPAQA. The Fe/B12 periplasmic-binding domain maps to 30-277; sequence RVISLSPSTT…QMASIPTPVA (248 aa). Tyr57 is a cyanocob(III)alamin binding site. Cys190 and Cys266 form a disulfide bridge.

It belongs to the BtuF family. In terms of assembly, the complex is composed of two ATP-binding proteins (BtuD), two transmembrane proteins (BtuC) and a solute-binding protein (BtuF).

Its subcellular location is the periplasm. Part of the ABC transporter complex BtuCDF involved in vitamin B12 import. Binds vitamin B12 and delivers it to the periplasmic surface of BtuC. The protein is Vitamin B12-binding protein of Yersinia pestis bv. Antiqua (strain Antiqua).